A 376-amino-acid chain; its full sequence is MDSSSGGAGGGGGAQIKGMGTHGGRYVLYNVYGNFFEVSSKYAPPIRPIGRGAYGIVCAAVNSENGEEVAIKKIGNAFDNHIDAKRTLREIKLLRHMDHENIIAIKDIIRPPRRDNFNDVYIVSELMDTDLHQIIRSNQPLTDDHCQYFLYQLLRGLKYVHSANVLHRDLKPSNLFLNANCDLKIADFGLARTTTETDLMTEYVVTRWYRAPELLLNCSQYTAAIDVWSVGCILGEIVTRQPLFPGRDYIQQLKLITELIGSPDDSSLGFLRSDNARRYMKQLPQYPRQDFRLRFRNMSAGAVDLLEKMLVFDPSRRITVDEALHHPYLASLHDINEEPTCPAPFSFDFEQPSFTEEHIKELIWRESLAFNPDPPY.

Residues 43–329 form the Protein kinase domain; it reads APPIRPIGRG…VDEALHHPYL (287 aa). ATP is bound by residues 49–57 and K72; that span reads IGRGAYGIV. The active-site Proton acceptor is D169. Phosphothreonine is present on T201. The TXY signature appears at 201–203; that stretch reads TEY. The residue at position 203 (Y203) is a Phosphotyrosine.

Belongs to the protein kinase superfamily. CMGC Ser/Thr protein kinase family. MAP kinase subfamily. Post-translationally, dually phosphorylated on Thr-201 and Tyr-203, which activates the enzyme.

The enzyme catalyses L-seryl-[protein] + ATP = O-phospho-L-seryl-[protein] + ADP + H(+). The catalysed reaction is L-threonyl-[protein] + ATP = O-phospho-L-threonyl-[protein] + ADP + H(+). With respect to regulation, activated by threonine and tyrosine phosphorylation. The sequence is that of Mitogen-activated protein kinase 6 (MPK6) from Oryza sativa subsp. japonica (Rice).